The following is a 215-amino-acid chain: Cytochrome b6 (215 aa).

The chain crosses the membrane as a helical span at residues 32-52 (IFYCLGGITLTCFIIQVATGF). C35 provides a ligand contact to heme c. Residues H86 and H100 each coordinate heme b. The next 3 helical transmembrane spans lie at 90–110 (ASMM…TGGF), 116–136 (LTWV…VTGY), and 186–206 (LHTF…FLMI). Heme b-binding residues include H187 and H202.

The protein belongs to the cytochrome b family. PetB subfamily. In terms of assembly, the 4 large subunits of the cytochrome b6-f complex are cytochrome b6, subunit IV (17 kDa polypeptide, PetD), cytochrome f and the Rieske protein, while the 4 small subunits are PetG, PetL, PetM and PetN. The complex functions as a dimer. The cofactor is heme b. Heme c is required as a cofactor.

It is found in the plastid. The protein localises to the chloroplast thylakoid membrane. Functionally, component of the cytochrome b6-f complex, which mediates electron transfer between photosystem II (PSII) and photosystem I (PSI), cyclic electron flow around PSI, and state transitions. The protein is Cytochrome b6 of Zygnema circumcarinatum (Green alga).